The sequence spans 128 residues: Sm-like protein LSM1A (128 aa).

Residues 10-85 (FFSTSLAAYL…VVLIGELDVE (76 aa)) form the Sm domain.

It belongs to the snRNP Sm proteins family. As to quaternary structure, component of the heptameric LSM1-LSM7 complex that forms a seven-membered ring structure with a donut shape. The LSM subunits are arranged in the order LSM1, LSM2, LSM3, LSM6, LSM5, LSM7 and LSM4. LSM1A subunit interacts only with its two neighboring subunits, LSM2 and LSM4. Expressed in roots, leaves, stems, flowers and siliques.

Its subcellular location is the cytoplasm. The protein localises to the P-body. Component of the cytoplasmic LSM1-LSM7 complex which is involved in mRNA degradation by promoting decapping and leading to accurate 5'-3' mRNA decay. LSM1A and LSM1B are essential for the formation of the cytoplasmic LSM1-LSM7 complex which regulates developmental gene expression by the decapping of specific development-related transcripts. Required for P-body formation during heat stress. This Arabidopsis thaliana (Mouse-ear cress) protein is Sm-like protein LSM1A.